The sequence spans 241 residues: Uridylate kinase (241 aa).

Residue 12-15 participates in ATP binding; it reads KVSG. The segment at 20–25 is involved in allosteric activation by GTP; the sequence is GEKGTG. UMP is bound at residue G54. ATP-binding residues include G55 and R59. Residues D74 and 135-142 contribute to the UMP site; that span reads TGNPYFST. Residues N163, Y169, and D172 each coordinate ATP.

The protein belongs to the UMP kinase family. In terms of assembly, homohexamer.

It is found in the cytoplasm. It carries out the reaction UMP + ATP = UDP + ADP. The protein operates within pyrimidine metabolism; CTP biosynthesis via de novo pathway; UDP from UMP (UMPK route): step 1/1. With respect to regulation, allosterically activated by GTP. Inhibited by UTP. Functionally, catalyzes the reversible phosphorylation of UMP to UDP. The sequence is that of Uridylate kinase from Lactobacillus johnsonii (strain CNCM I-12250 / La1 / NCC 533).